An 87-amino-acid polypeptide reads, in one-letter code: Putative membrane protein insertion efficiency factor (87 aa).

Belongs to the UPF0161 family.

It is found in the cell membrane. Could be involved in insertion of integral membrane proteins into the membrane. This is Putative membrane protein insertion efficiency factor from Ligilactobacillus salivarius (strain UCC118) (Lactobacillus salivarius).